A 151-amino-acid polypeptide reads, in one-letter code: Transcriptional regulator MraZ (151 aa).

2 SpoVT-AbrB domains span residues Ala5 to Glu52 and Ala81 to Glu124.

This sequence belongs to the MraZ family. Forms oligomers.

The protein resides in the cytoplasm. The protein localises to the nucleoid. In Haemophilus influenzae (strain 86-028NP), this protein is Transcriptional regulator MraZ.